A 258-amino-acid polypeptide reads, in one-letter code: Deoxyribose-phosphate aldolase (258 aa).

Aspartate 102 acts as the Proton donor/acceptor in catalysis. Residue lysine 165 is the Schiff-base intermediate with acetaldehyde of the active site. Catalysis depends on lysine 199, which acts as the Proton donor/acceptor.

It belongs to the DeoC/FbaB aldolase family. DeoC type 2 subfamily.

It localises to the cytoplasm. It catalyses the reaction 2-deoxy-D-ribose 5-phosphate = D-glyceraldehyde 3-phosphate + acetaldehyde. Its pathway is carbohydrate degradation; 2-deoxy-D-ribose 1-phosphate degradation; D-glyceraldehyde 3-phosphate and acetaldehyde from 2-deoxy-alpha-D-ribose 1-phosphate: step 2/2. Its function is as follows. Catalyzes a reversible aldol reaction between acetaldehyde and D-glyceraldehyde 3-phosphate to generate 2-deoxy-D-ribose 5-phosphate. The polypeptide is Deoxyribose-phosphate aldolase (Vibrio campbellii (strain ATCC BAA-1116)).